Here is a 143-residue protein sequence, read N- to C-terminus: Transthyretin-like protein 33 (143 aa).

The N-terminal stretch at 1–20 (MSRLACISSLFILCAIGSEA) is a signal peptide.

Belongs to the nematode transthyretin-like family. As to expression, expressed in head cells next to and anterior of the first pharyngeal bulb, the pharynx, and the hypodermis.

It is found in the secreted. Its function is as follows. Protects dopaminergic neurons from degeneration caused by oxidative stress. In Caenorhabditis elegans, this protein is Transthyretin-like protein 33.